Reading from the N-terminus, the 172-residue chain is MDRAEKKESVAALADVFQKTSVVVVAHYSGLTVAQMQNLRKQMRASGATVQVAKNRLVKIALDGTPVSSISPLLKGPTLIAYSDDPVAAPKVAVGFAKDHDKFVILGGAMGTTALNVDGVRSLATMPSLDELRGKLVGLIQAPATKLAQLTTAPAAKLARVFGAYAAKDDAA.

Belongs to the universal ribosomal protein uL10 family. As to quaternary structure, part of the ribosomal stalk of the 50S ribosomal subunit. The N-terminus interacts with L11 and the large rRNA to form the base of the stalk. The C-terminus forms an elongated spine to which L12 dimers bind in a sequential fashion forming a multimeric L10(L12)X complex.

Forms part of the ribosomal stalk, playing a central role in the interaction of the ribosome with GTP-bound translation factors. In Beijerinckia indica subsp. indica (strain ATCC 9039 / DSM 1715 / NCIMB 8712), this protein is Large ribosomal subunit protein uL10.